We begin with the raw amino-acid sequence, 340 residues long: Glyceraldehyde-3-phosphate dehydrogenase (340 aa).

Residues 11 to 12 (TI) and G109 each bind NAD(+). 138–140 (SCN) provides a ligand contact to D-glyceraldehyde 3-phosphate. C139 functions as the Nucleophile in the catalytic mechanism. R167 is an NAD(+) binding site. 193 to 194 (HA) is a D-glyceraldehyde 3-phosphate binding site. Q300 contacts NAD(+).

This sequence belongs to the glyceraldehyde-3-phosphate dehydrogenase family. In terms of assembly, homotetramer.

Its subcellular location is the cytoplasm. The enzyme catalyses D-glyceraldehyde 3-phosphate + phosphate + NADP(+) = (2R)-3-phospho-glyceroyl phosphate + NADPH + H(+). It catalyses the reaction D-glyceraldehyde 3-phosphate + phosphate + NAD(+) = (2R)-3-phospho-glyceroyl phosphate + NADH + H(+). Its pathway is carbohydrate degradation; glycolysis; pyruvate from D-glyceraldehyde 3-phosphate: step 1/5. The protein is Glyceraldehyde-3-phosphate dehydrogenase of Saccharolobus islandicus (strain Y.N.15.51 / Yellowstone #2) (Sulfolobus islandicus).